A 171-amino-acid polypeptide reads, in one-letter code: S-ribosylhomocysteine lyase (171 aa).

The Fe cation site is built by H54, H58, and C128.

The protein belongs to the LuxS family. Homodimer. Fe cation is required as a cofactor.

It carries out the reaction S-(5-deoxy-D-ribos-5-yl)-L-homocysteine = (S)-4,5-dihydroxypentane-2,3-dione + L-homocysteine. Its function is as follows. Involved in the synthesis of autoinducer 2 (AI-2) which is secreted by bacteria and is used to communicate both the cell density and the metabolic potential of the environment. The regulation of gene expression in response to changes in cell density is called quorum sensing. Catalyzes the transformation of S-ribosylhomocysteine (RHC) to homocysteine (HC) and 4,5-dihydroxy-2,3-pentadione (DPD). This chain is S-ribosylhomocysteine lyase, found in Shigella flexneri.